Reading from the N-terminus, the 168-residue chain is uncharacterized protein (168 aa).

Residues 1-52 form a disordered region; the sequence is MVLGLASFPESLSSQSETATQPRRPSVKWDLGSDYRKGTEETTASGSNFRRE. Residues 10-23 are compositionally biased toward polar residues; it reads ESLSSQSETATQPR. Residues 31–40 show a composition bias toward basic and acidic residues; that stretch reads LGSDYRKGTE.

This is an uncharacterized protein from Mus musculus (Mouse).